Reading from the N-terminus, the 620-residue chain is Transcription factor GTE11 (620 aa).

Residues Met-1–Thr-35 form a disordered region. Positions Thr-124–Ile-230 constitute a Bromo domain. Positions Asn-270–Asp-351 constitute an NET domain. The residue at position 417 (Ser-417) is a Phosphoserine. The transcription activation domain stretch occupies residues Glu-445–Asp-620. Residues Asn-470–Asn-544 are a coiled coil. Disordered stretches follow at residues Lys-491 to Lys-511 and Glu-597 to Asp-620.

As to quaternary structure, interacts with BT1, BT2 and BT4.

The protein localises to the nucleus. This is Transcription factor GTE11 (GTE11) from Arabidopsis thaliana (Mouse-ear cress).